A 327-amino-acid polypeptide reads, in one-letter code: Aspartate--ammonia ligase (327 aa).

Belongs to the class-II aminoacyl-tRNA synthetase family. AsnA subfamily.

It is found in the cytoplasm. It carries out the reaction L-aspartate + NH4(+) + ATP = L-asparagine + AMP + diphosphate + H(+). It functions in the pathway amino-acid biosynthesis; L-asparagine biosynthesis; L-asparagine from L-aspartate (ammonia route): step 1/1. The chain is Aspartate--ammonia ligase from Bacillus cereus (strain ATCC 10987 / NRS 248).